Reading from the N-terminus, the 243-residue chain is Thiamin pyrophosphokinase 1 (243 aa).

The protein belongs to the thiamine pyrophosphokinase family.

The enzyme catalyses thiamine + ATP = thiamine diphosphate + AMP + H(+). The protein operates within cofactor biosynthesis; thiamine diphosphate biosynthesis; thiamine diphosphate from thiamine: step 1/1. Functionally, catalyzes the phosphorylation of thiamine to thiamine pyrophosphate. Functions cell non-autonomously. The polypeptide is Thiamin pyrophosphokinase 1 (Caenorhabditis elegans).